The sequence spans 66 residues: UPF0434 protein RPC_0266 (66 aa).

Belongs to the UPF0434 family.

The polypeptide is UPF0434 protein RPC_0266 (Rhodopseudomonas palustris (strain BisB18)).